Reading from the N-terminus, the 433-residue chain is Succinate--CoA ligase [GDP-forming] subunit beta, mitochondrial (433 aa).

The transit peptide at M1–W38 directs the protein to the mitochondrion. One can recognise an ATP-grasp domain in the interval K47 to F275. GTP is bound at residue Q58. The residue at position 67 (K67) is an N6-acetyllysine; alternate. Position 67 is an N6-succinyllysine; alternate (K67). Residue K74 is modified to N6-acetyllysine. K79 carries the N6-succinyllysine modification. Position 91 to 93 (G91 to G93) interacts with GTP. 3 positions are modified to N6-acetyllysine: K112, K133, and K140. A GTP-binding site is contributed by L147. A Phosphoserine modification is found at S162. K201 carries the N6-acetyllysine modification. Residue S217 is modified to Phosphoserine. An N6-acetyllysine mark is found at K219 and K228. 2 residues coordinate Mg(2+): N244 and D258. At K272 the chain carries N6-acetyllysine. N309 contributes to the substrate binding site. An N6-succinyllysine modification is found at K339. N6-acetyllysine is present on K348. G366–V368 contacts substrate. 3 positions are modified to N6-acetyllysine: K387, K407, and K424.

This sequence belongs to the succinate/malate CoA ligase beta subunit family. GTP-specific subunit beta subfamily. As to quaternary structure, heterodimer of an alpha and a beta subunit. The beta subunit determines specificity for GTP. The cofactor is Mg(2+).

Its subcellular location is the mitochondrion. The catalysed reaction is GTP + succinate + CoA = succinyl-CoA + GDP + phosphate. Its pathway is carbohydrate metabolism; tricarboxylic acid cycle; succinate from succinyl-CoA (ligase route): step 1/1. In terms of biological role, GTP-specific succinyl-CoA synthetase functions in the citric acid cycle (TCA), coupling the hydrolysis of succinyl-CoA to the synthesis of GTP and thus represents the only step of substrate-level phosphorylation in the TCA. The beta subunit provides nucleotide specificity of the enzyme and binds the substrate succinate, while the binding sites for coenzyme A and phosphate are found in the alpha subunit. This is Succinate--CoA ligase [GDP-forming] subunit beta, mitochondrial from Mus musculus (Mouse).